The following is a 417-amino-acid chain: Adenylosuccinate synthetase (417 aa).

Residues Gly11 to Lys17 and Gly39 to Thr41 contribute to the GTP site. Asp12 functions as the Proton acceptor in the catalytic mechanism. Positions 12 and 39 each coordinate Mg(2+). IMP is bound by residues Asp12 to Lys15, Asn37 to His40, Thr126, Arg140, Gln218, Thr233, and Arg295. Residue His40 is the Proton donor of the active site. Position 291-297 (Thr291–Arg297) interacts with substrate. GTP-binding positions include Arg297, Lys323–Asp325, and Ser406–Gly408.

It belongs to the adenylosuccinate synthetase family. Homodimer. Requires Mg(2+) as cofactor.

It localises to the cytoplasm. The catalysed reaction is IMP + L-aspartate + GTP = N(6)-(1,2-dicarboxyethyl)-AMP + GDP + phosphate + 2 H(+). It functions in the pathway purine metabolism; AMP biosynthesis via de novo pathway; AMP from IMP: step 1/2. Functionally, plays an important role in the de novo pathway of purine nucleotide biosynthesis. Catalyzes the first committed step in the biosynthesis of AMP from IMP. The protein is Adenylosuccinate synthetase of Neorickettsia sennetsu (strain ATCC VR-367 / Miyayama) (Ehrlichia sennetsu).